A 1286-amino-acid polypeptide reads, in one-letter code: CLIP-associating protein 2 (1286 aa).

The tract at residues 1–40 is golgi localization; that stretch reads MRRLICKRICDYKSFDDEESVDGNRPSSAASAFKVPAPKT. A phosphoserine mark is found at Ser14 and Ser20. Residues 17–67 form a disordered region; the sequence is DEESVDGNRPSSAASAFKVPAPKTPGNPVSSARKPGSAGGPKVGGPSKEGG. The segment covering 53–67 has biased composition (gly residues); sequence SAGGPKVGGPSKEGG. Positions 66-317 are TOG 1; the sequence is GGAGAVDEDD…KSLQTYLKSS (252 aa). 3 HEAT repeats span residues 179–214, 215–251, and 256–293; these read HGAE…IRHT, HVPR…EWQT, and RHAA…HFPG. Positions 320–374 are disordered; the sequence is VASLPQSDRSSSSSQESLNRPFSSKWSTANPSTVAGRVSVGGSKANPLPGSLQRS. Ser322, Ser333, and Ser336 each carry phosphoserine. Positions 322–340 are enriched in low complexity; it reads SLPQSDRSSSSSQESLNRP. Polar residues predominate over residues 341-352; the sequence is FSSKWSTANPST. Phosphoserine occurs at positions 374, 376, and 413. A disordered region spans residues 411–473; sequence YASLEDTSDK…GSRSGSPGRV (63 aa). Basic and acidic residues predominate over residues 417–431; the sequence is TSDKMDGTASDDGRV. The segment at 450 to 565 is interaction with microtubules, MAPRE1 and MAPRE3; sequence RGRSRTKMVS…GPGYGISQSS (116 aa). Over residues 459-473 the composition is skewed to low complexity; that stretch reads SQSQPGSRSGSPGRV. Residues Ser461, Ser465, Ser469, Ser484, and Ser495 each carry the phosphoserine modification. Residues 493-564 form a disordered region; that stretch reads SASAQKRSKI…LGPGYGISQS (72 aa). The SXIP motif 1; mediates interaction with MAPRE1 and targeting to microtubule plus ends motif lies at 500 to 503; that stretch reads SKIP. Position 513 is a phosphoserine (Ser513). The SXIP motif 2; mediates interaction with MAPRE1 and targeting to microtubule plus ends motif lies at 523–526; sequence SRIP. Ser531, Ser535, Ser570, Ser572, Ser581, Ser614, and Ser620 each carry phosphoserine. Basic and acidic residues predominate over residues 605–616; sequence RRYESYGMHSDD. The segment at 605–638 is disordered; the sequence is RRYESYGMHSDDDANSDASSACSERSYSSRNGSI. The segment covering 620–634 has biased composition (low complexity); sequence SDASSACSERSYSSR. Residues 642 to 873 form a TOG 2 region; it reads MRQTEDVAEV…TKLLHNHLRN (232 aa). HEAT repeat units follow at residues 702-739 and 764-801; these read KVFS…KMGA and LQFN…QMDP. At Thr779 the chain carries Phosphothreonine. The tract at residues 864–1286 is interaction with RSN and localization to the Golgi and kinetochores; that stretch reads TKLLHNHLRN…DPTADVSGQS (423 aa). Disordered regions lie at residues 870-920 and 944-989; these read HLRN…FDYD and SFRS…SQPA. Polar residues-rich tracts occupy residues 872 to 884 and 893 to 914; these read RNTG…SMGS and SPAN…TLSP. Ser884 is subject to Phosphoserine. 4 positions are modified to phosphoserine: Ser944, Ser947, Ser1005, and Ser1021. Over residues 947–964 the composition is skewed to basic and acidic residues; the sequence is SQEDMSEPVRRDPKKEDG. The required for cortical localization stretch occupies residues 1009–1286; the sequence is RDYNPYNYSD…DPTADVSGQS (278 aa). 3 HEAT repeats span residues 1046-1083, 1090-1127, and 1208-1245; these read LDHS…TQEE, EHFK…HQPA, and MLLP…VIGD.

It belongs to the CLASP family. Interacts with microtubules. Interacts with MAPRE1; probably required for targeting to growing microtubule plus ends. Interacts with ERC1, MAPRE3 and PHLDB2. The interaction with ERC1 may be mediated by PHLDB2. Interacts with GCC2; recruits CLASP2 to Golgi membranes. Interacts with CLIP2 and RSN. Interacts with MACF1. Interacts with mtcl2. Interacts with MTCL1. Post-translationally, phosphorylated by GSK3B. Phosphorylation by GSK3B may negatively regulate binding to microtubule lattices in lamella. Isoform 2 is phosphorylated on Ser-241. In terms of tissue distribution, highly expressed in brain and at low levels in heart, kidney and lung.

The protein resides in the cytoplasm. It is found in the cytoskeleton. It localises to the microtubule organizing center. Its subcellular location is the centrosome. The protein localises to the chromosome. The protein resides in the centromere. It is found in the kinetochore. It localises to the spindle. Its subcellular location is the spindle pole. The protein localises to the golgi apparatus. The protein resides in the trans-Golgi network. It is found in the cell membrane. It localises to the cell projection. Its subcellular location is the ruffle membrane. The protein localises to the cell cortex. In terms of biological role, microtubule plus-end tracking protein that promotes the stabilization of dynamic microtubules. Involved in the nucleation of noncentrosomal microtubules originating from the trans-Golgi network (TGN). Required for the polarization of the cytoplasmic microtubule arrays in migrating cells towards the leading edge of the cell. May act at the cell cortex to enhance the frequency of rescue of depolymerizing microtubules by attaching their plus-ends to cortical platforms composed of ERC1 and PHLDB2. This cortical microtubule stabilizing activity is regulated at least in part by phosphatidylinositol 3-kinase signaling. Also performs a similar stabilizing function at the kinetochore which is essential for the bipolar alignment of chromosomes on the mitotic spindle. Acts as a mediator of ERBB2-dependent stabilization of microtubules at the cell cortex. The chain is CLIP-associating protein 2 (Clasp2) from Mus musculus (Mouse).